The following is a 305-amino-acid chain: Ribosomal RNA small subunit methyltransferase H (305 aa).

S-adenosyl-L-methionine is bound by residues 33 to 35 (GGY), Asp-51, Phe-82, Asp-96, and Gln-103.

The protein belongs to the methyltransferase superfamily. RsmH family.

It localises to the cytoplasm. It carries out the reaction cytidine(1402) in 16S rRNA + S-adenosyl-L-methionine = N(4)-methylcytidine(1402) in 16S rRNA + S-adenosyl-L-homocysteine + H(+). Its function is as follows. Specifically methylates the N4 position of cytidine in position 1402 (C1402) of 16S rRNA. The polypeptide is Ribosomal RNA small subunit methyltransferase H (Rickettsia bellii (strain OSU 85-389)).